Here is a 419-residue protein sequence, read N- to C-terminus: Peptide chain release factor subunit 1 (419 aa).

Belongs to the eukaryotic release factor 1 family. Heterodimer of two subunits, one of which binds GTP.

Its subcellular location is the cytoplasm. In terms of biological role, directs the termination of nascent peptide synthesis (translation) in response to the termination codons UAA, UAG and UGA. In Methanococcus maripaludis (strain C5 / ATCC BAA-1333), this protein is Peptide chain release factor subunit 1.